A 258-amino-acid polypeptide reads, in one-letter code: Chaperone protein caf1M (258 aa).

An N-terminal signal peptide occupies residues 1–20 (MILNRLSTLGIITFGMLSFA). A disulfide bridge connects residues C121 and C160.

This sequence belongs to the periplasmic pilus chaperone family.

It localises to the periplasm. Functionally, has a stimulatory role for the envelope antigen F1 secretion. It seems to interact with the subunit polypeptide and to prevent it from digestion by a protease. The sequence is that of Chaperone protein caf1M (caf1M) from Yersinia pestis.